Reading from the N-terminus, the 344-residue chain is Phosphoribosylformylglycinamidine cyclo-ligase (344 aa).

It belongs to the AIR synthase family.

It localises to the cytoplasm. The enzyme catalyses 2-formamido-N(1)-(5-O-phospho-beta-D-ribosyl)acetamidine + ATP = 5-amino-1-(5-phospho-beta-D-ribosyl)imidazole + ADP + phosphate + H(+). Its pathway is purine metabolism; IMP biosynthesis via de novo pathway; 5-amino-1-(5-phospho-D-ribosyl)imidazole from N(2)-formyl-N(1)-(5-phospho-D-ribosyl)glycinamide: step 2/2. This chain is Phosphoribosylformylglycinamidine cyclo-ligase, found in Anaeromyxobacter sp. (strain Fw109-5).